The primary structure comprises 375 residues: Protein SSUH2 homolog (375 aa).

Expressed in enterocytes of small and large intestinal mucosa (at protein level). Expressed in chromaffine and interstitial cells. Expressed in peripheral blood and gingival cells.

It localises to the cytoplasm. It is found in the nucleus. In terms of biological role, plays a role in odontogenesis. The sequence is that of Protein SSUH2 homolog from Homo sapiens (Human).